The sequence spans 452 residues: Activating transcription factor 7-interacting protein 2 (452 aa).

Serine 184 is modified (phosphoserine). Positions 185–206 (RSKRISSVNHTPLNSSEKAGRK) are disordered. Serine 257 bears the Phosphoserine mark. Positions 346 to 450 (PPQKPELKVK…IKSIPRFSEN (105 aa)) constitute a Fibronectin type-III domain.

This sequence belongs to the MCAF family. In terms of assembly, interacts with MBD1, SETDB1 and SP1. Probably forms a complex with SETDB1 and MBD1. Expressed in testis.

Its subcellular location is the nucleus. Recruiter that couples transcriptional factors to general transcription apparatus and thereby modulates transcription regulation and chromatin formation. Can both act as an activator or a repressor depending on the context. Mediates MBD1-dependent transcriptional repression, probably by recruiting complexes containing SETDB1. The complex formed with MBD1 and SETDB1 represses transcription and probably couples DNA methylation and histone H3 'Lys-9' trimethylation (H3K9me3) activity. The polypeptide is Activating transcription factor 7-interacting protein 2 (Atf7ip2) (Mus musculus (Mouse)).